Reading from the N-terminus, the 110-residue chain is NADH-quinone oxidoreductase subunit K (110 aa).

3 helical membrane passes run 13–33 (LNHY…GLFM), 41–61 (ILMS…AFSV), and 73–93 (IIIL…LLIY).

Belongs to the complex I subunit 4L family. In terms of assembly, NDH-1 is composed of 14 different subunits. Subunits NuoA, H, J, K, L, M, N constitute the membrane sector of the complex.

The protein localises to the cell inner membrane. The enzyme catalyses a quinone + NADH + 5 H(+)(in) = a quinol + NAD(+) + 4 H(+)(out). Functionally, NDH-1 shuttles electrons from NADH, via FMN and iron-sulfur (Fe-S) centers, to quinones in the respiratory chain. The immediate electron acceptor for the enzyme in this species is believed to be ubiquinone. Couples the redox reaction to proton translocation (for every two electrons transferred, four hydrogen ions are translocated across the cytoplasmic membrane), and thus conserves the redox energy in a proton gradient. The protein is NADH-quinone oxidoreductase subunit K of Rickettsia prowazekii (strain Madrid E).